The sequence spans 565 residues: CTP synthase (565 aa).

An amidoligase domain region spans residues 1–272; the sequence is MARPKNVKHI…DLRVMKKLGL (272 aa). Ser18 contributes to the CTP binding site. Residue Ser18 coordinates UTP. 19–24 is a binding site for ATP; that stretch reads SLGKGI. Residue Tyr59 participates in L-glutamine binding. Asp76 contacts ATP. Mg(2+)-binding residues include Asp76 and Glu146. CTP is bound by residues 153–155, 193–198, and Lys229; these read DIE and KTKPTQ. Residues 193–198 and Lys229 contribute to the UTP site; that span reads KTKPTQ. Residues 299–543 enclose the Glutamine amidotransferase type-1 domain; it reads TIGVCGKYTE…VQAAKEFAMG (245 aa). Gly363 is an L-glutamine binding site. Cys390 serves as the catalytic Nucleophile; for glutamine hydrolysis. L-glutamine contacts are provided by residues 391 to 394, Glu414, and Arg471; that span reads LGMQ. Catalysis depends on residues His516 and Glu518.

This sequence belongs to the CTP synthase family. Homotetramer.

The enzyme catalyses UTP + L-glutamine + ATP + H2O = CTP + L-glutamate + ADP + phosphate + 2 H(+). It carries out the reaction L-glutamine + H2O = L-glutamate + NH4(+). The catalysed reaction is UTP + NH4(+) + ATP = CTP + ADP + phosphate + 2 H(+). It participates in pyrimidine metabolism; CTP biosynthesis via de novo pathway; CTP from UDP: step 2/2. With respect to regulation, allosterically activated by GTP, when glutamine is the substrate; GTP has no effect on the reaction when ammonia is the substrate. The allosteric effector GTP functions by stabilizing the protein conformation that binds the tetrahedral intermediate(s) formed during glutamine hydrolysis. Inhibited by the product CTP, via allosteric rather than competitive inhibition. Catalyzes the ATP-dependent amination of UTP to CTP with either L-glutamine or ammonia as the source of nitrogen. Regulates intracellular CTP levels through interactions with the four ribonucleotide triphosphates. The polypeptide is CTP synthase (Chlorobaculum parvum (strain DSM 263 / NCIMB 8327) (Chlorobium vibrioforme subsp. thiosulfatophilum)).